We begin with the raw amino-acid sequence, 86 residues long: uncharacterized protein (86 aa).

This is an uncharacterized protein from Vaccinia virus (strain Copenhagen) (VACV).